The following is a 780-amino-acid chain: Copper-exporting P-type ATPase (780 aa).

Residues 2-67 (QRIQLNITGM…AVRRAALCTD (66 aa)) enclose the HMA domain. Cu(+) contacts are provided by Cys-13 and Cys-16. The next 6 membrane-spanning stretches (helical) occupy residues 89 to 109 (LAVA…FAVL), 114 to 134 (FPGW…WAAW), 153 to 173 (TLIS…VFGH), 185 to 205 (ALLG…VFVL), 348 to 368 (VFVP…LIAG), and 374 to 394 (VFSA…GLAT). The 4-aspartylphosphate intermediate role is filled by Asp-430. Helical transmembrane passes span 680-698 (FNMV…IAAA) and 704-722 (LVAG…SNSL).

It belongs to the cation transport ATPase (P-type) (TC 3.A.3) family. Type IB subfamily.

It is found in the cell membrane. It catalyses the reaction Cu(+)(in) + ATP + H2O = Cu(+)(out) + ADP + phosphate + H(+). Functionally, involved in copper export. In Mycobacterium leprae (strain TN), this protein is Copper-exporting P-type ATPase (ctpA).